Reading from the N-terminus, the 476-residue chain is Amino acid permease 3 (476 aa).

Residues Met-1–Ser-33 lie on the Cytoplasmic side of the membrane. The chain crosses the membrane as a helical span at residues Val-34–Ala-54. The Extracellular segment spans residues Trp-55–Thr-57. A helical membrane pass occupies residues Ala-58–Phe-78. At Thr-79–Tyr-122 the chain is on the cytoplasmic side. A helical transmembrane segment spans residues Leu-123–Ile-143. The Extracellular portion of the chain corresponds to Lys-144–Met-166. Helical transmembrane passes span Ile-167–Trp-187 and Leu-188–Ile-208. The Extracellular segment spans residues Ala-209 to Leu-277. A helical membrane pass occupies residues Val-278–Phe-298. Over Gly-299–Asp-300 the chain is Cytoplasmic. Residues Leu-301–Ile-321 traverse the membrane as a helical segment. Residues Ala-322–Ala-324 are Extracellular-facing. Residues Ala-325–Ile-345 traverse the membrane as a helical segment. Residues Glu-346 to Thr-384 lie on the Cytoplasmic side of the membrane. 2 helical membrane passes run Val-385 to Gly-405 and Leu-406 to Ala-426. Topologically, residues Gln-427 to Gln-441 are cytoplasmic. The chain crosses the membrane as a helical span at residues Val-442–Val-462. At Leu-463–Tyr-476 the chain is on the extracellular side.

It belongs to the amino acid/polyamine transporter 2 family. Amino acid/auxin permease (AAAP) (TC 2.A.18.2) subfamily. In terms of tissue distribution, expressed in the root phloem. Detected in stamens, in cotyledons, and in major veins of mature leaves.

The protein resides in the cell membrane. It is found in the nucleus membrane. It localises to the endomembrane system. Its activity is regulated as follows. Inhibited by carbonylcyanide m-chlorophenylhydrazone and 2,4-dinitrophenol. In terms of biological role, amino acid-proton symporter. Stereospecific transporter with a broad specificity for GABA, tryptophan and both neutral and basic amino acids. High affinity transport of cationic amino acids. This chain is Amino acid permease 3 (AAP3), found in Arabidopsis thaliana (Mouse-ear cress).